The chain runs to 238 residues: Mannose-binding protein A (238 aa).

The N-terminal stretch at 1–17 (MLLLPLLVLLCVVSVSS) is a signal peptide. The segment covering 38 to 49 (DGRDGPKGEKGE) has biased composition (basic and acidic residues). Residues 38–87 (DGRDGPKGEKGEPGQGLRGLQGPPGKLGPPGSVGAPGSQGPKGQKGDRGD) are disordered. A Collagen-like domain is found at 39-88 (GRDGPKGEKGEPGQGLRGLQGPPGKLGPPGSVGAPGSQGPKGQKGDRGDS). At Pro43 the chain carries 4-hydroxyproline. 5-hydroxylysine occurs at positions 44 and 47. Residues Lys44 and Lys47 are each glycosylated (O-linked (Gal...) hydroxylysine). 5 positions are modified to 4-hydroxyproline: Pro50, Pro61, Pro67, Pro73, and Pro78. Residues Lys79 and Lys82 each carry the 5-hydroxylysine modification. Lys79 and Lys82 each carry an O-linked (Gal...) hydroxylysine glycan. The 96-residue stretch at 143 to 238 (ALCSELRGTV…SHTAVCEFPA (96 aa)) folds into the C-type lectin domain. Intrachain disulfides connect Cys145–Cys234 and Cys212–Cys226. The Ca(2+) site is built by Asp178, Glu182, Glu202, Asn204, Asp205, Glu210, Asp211, Asn222, and Asp223. Positions 202 to 210 (EPNDHGSGE) are calcium-dependent carbohydrate binding.

In terms of assembly, homotrimer. Forms higher oligomeric complexes formed by the association of two, three or more homotrimers. Oligomerization occurs in the endoplasmic reticulum. Interacts with MASP1 and MASP2. Post-translationally, hydroxylated on lysine and proline residues within the collagen-like domain. In terms of processing, O-glycosylated. O-linked glycans on hydroxylysine residues consist of Glc-Gal disaccharides bound to the oxygen atom of post-translationally added hydroxyl groups. Detected in blood serum (at protein level).

Its subcellular location is the secreted. In terms of biological role, calcium-dependent lectin. Plays a role in the innate immune response by binding mannose, fucose and N-acetylglucosamine moieties on different microorganisms and mediating activation of the lectin complement pathway. Binds to late apoptotic cells, as well as to apoptotic blebs and to necrotic cells, but not to early apoptotic cells, facilitating their uptake by macrophages. This chain is Mannose-binding protein A (Mbl1), found in Rattus norvegicus (Rat).